The chain runs to 344 residues: Dihydroorotase (344 aa).

H14 and H16 together coordinate Zn(2+). Residues 16 to 18 (HLR) and N42 each bind substrate. Zn(2+) contacts are provided by K100, H137, and H175. An N6-carboxylysine modification is found at K100. H137 is a binding site for substrate. Substrate is bound at residue L220. A Zn(2+)-binding site is contributed by D248. D248 is a catalytic residue. Substrate-binding residues include H252 and A264.

Belongs to the metallo-dependent hydrolases superfamily. DHOase family. Class II DHOase subfamily. In terms of assembly, homodimer. It depends on Zn(2+) as a cofactor.

The enzyme catalyses (S)-dihydroorotate + H2O = N-carbamoyl-L-aspartate + H(+). The protein operates within pyrimidine metabolism; UMP biosynthesis via de novo pathway; (S)-dihydroorotate from bicarbonate: step 3/3. Functionally, catalyzes the reversible cyclization of carbamoyl aspartate to dihydroorotate. The protein is Dihydroorotase of Cupriavidus necator (strain ATCC 17699 / DSM 428 / KCTC 22496 / NCIMB 10442 / H16 / Stanier 337) (Ralstonia eutropha).